A 565-amino-acid chain; its full sequence is uncharacterized protein (565 aa).

This is an uncharacterized protein from Acanthamoeba polyphaga mimivirus (APMV).